Reading from the N-terminus, the 375-residue chain is Tryptophan dimethylallyltransferase (375 aa).

L-tryptophan-binding positions include Ile83–Leu84 and Glu92. Substrate-binding residues include Arg103, Lys189, and Tyr191. L-tryptophan is bound by residues Tyr193 and Arg246. Substrate contacts are provided by Arg259, Lys261, Tyr263, Gln345, and Tyr347.

It belongs to the tryptophan dimethylallyltransferase family. As to quaternary structure, homodimer.

The catalysed reaction is L-tryptophan + dimethylallyl diphosphate = 4-(3-methylbut-2-enyl)-L-tryptophan + diphosphate. The protein operates within alkaloid biosynthesis; ergot alkaloid biosynthesis. Its function is as follows. Tryptophan dimethylallyltransferase; part of the gene cluster that mediates the biosynthesis of fungal ergot alkaloid. DmaW catalyzes the first step of ergot alkaloid biosynthesis by condensing dimethylallyl diphosphate (DMAP) and tryptophan to form 4-dimethylallyl-L-tryptophan. The second step is catalyzed by the methyltransferase easF that methylates 4-dimethylallyl-L-tryptophan in the presence of S-adenosyl-L-methionine, resulting in the formation of 4-dimethylallyl-L-abrine. The catalase easC and the FAD-dependent oxidoreductase easE then transform 4-dimethylallyl-L-abrine to chanoclavine-I which is further oxidized by easD in the presence of NAD(+), resulting in the formation of chanoclavine-I aldehyde. Chanoclavine-I aldehyde is the precursor of ergoamides and ergopeptines in Clavicipitaceae, and clavine-type alcaloids such as fumiclavine in Trichocomaceae. However, the metabolites downstream of chanoclavine-I aldehyde in Arthrodermataceae have not been identified yet. The sequence is that of Tryptophan dimethylallyltransferase from Trichophyton verrucosum (strain HKI 0517).